Reading from the N-terminus, the 306-residue chain is Tryptophan 2,3-dioxygenase (306 aa).

Residues 1-33 (MQPPGDDAAPRCPFAGAHAPDAPHVPEAAGDDA) are disordered. Substrate is bound by residues 75–79 (FIIQH), Y137, and R141. H264 contributes to the heme binding site. Residue T278 participates in substrate binding.

The protein belongs to the tryptophan 2,3-dioxygenase family. As to quaternary structure, homotetramer. It depends on heme as a cofactor.

The enzyme catalyses L-tryptophan + O2 = N-formyl-L-kynurenine. Its pathway is amino-acid degradation; L-tryptophan degradation via kynurenine pathway; L-kynurenine from L-tryptophan: step 1/2. In terms of biological role, heme-dependent dioxygenase that catalyzes the oxidative cleavage of the L-tryptophan (L-Trp) pyrrole ring and converts L-tryptophan to N-formyl-L-kynurenine. Catalyzes the oxidative cleavage of the indole moiety. The chain is Tryptophan 2,3-dioxygenase from Burkholderia pseudomallei (strain 668).